Reading from the N-terminus, the 283-residue chain is Pantothenate synthetase (283 aa).

26 to 33 is a binding site for ATP; sequence MGNLHEGH. His-33 functions as the Proton donor in the catalytic mechanism. Residue Gln-57 coordinates (R)-pantoate. Beta-alanine is bound at residue Gln-57. 148–151 is an ATP binding site; the sequence is GKKD. Gln-154 contributes to the (R)-pantoate binding site. 185–188 serves as a coordination point for ATP; the sequence is LSSR.

Belongs to the pantothenate synthetase family. Homodimer.

It localises to the cytoplasm. The catalysed reaction is (R)-pantoate + beta-alanine + ATP = (R)-pantothenate + AMP + diphosphate + H(+). It functions in the pathway cofactor biosynthesis; (R)-pantothenate biosynthesis; (R)-pantothenate from (R)-pantoate and beta-alanine: step 1/1. Functionally, catalyzes the condensation of pantoate with beta-alanine in an ATP-dependent reaction via a pantoyl-adenylate intermediate. The protein is Pantothenate synthetase of Polaromonas naphthalenivorans (strain CJ2).